The chain runs to 286 residues: Pheromone receptor transcription factor (286 aa).

Serine 2 carries the N-acetylserine modification. Serine 2 is subject to Phosphoserine. The MADS-box domain maps to arginine 18–phenylalanine 72. The segment covering proline 97–asparagine 119 has biased composition (acidic residues). The tract at residues proline 97–valine 137 is disordered. Over residues glutamine 122–glutamine 136 the composition is skewed to low complexity. A Phosphoserine modification is found at serine 144. The segment at leucine 167–proline 264 is disordered. The segment covering asparagine 171–proline 246 has biased composition (low complexity).

Homodimer. Binds DNA with a high specificity in complex with mating-type protein ALPHA1. Also binds DNA with a high specificity as a heterotetramer consisting of an ALPHA2 dimer and an MCM1 dimer. Interacts with YHP1 and YOX1, possibly leading to its inactivation. Interacts with ARG80 and ARG82.

The protein localises to the nucleus. In terms of biological role, transcription factor required for the efficient replication of minichromosomes and the transcriptional regulation of early cell cycle genes. Activates transcription of ECB-dependent genes during the G1/M phase. Genes that contain a ECB (early cell box) element in their transcription regulatory region are transcribed only during G1/M phases. Interacts with the alpha-2 repressor or with the alpha-1 activator thereby regulating the expression of mating-type-specific genes. With ARG80, ARG81 and ARG82, coordinates the expression of arginine anabolic and catabolic genes in response to arginine. This chain is Pheromone receptor transcription factor (MCM1), found in Saccharomyces cerevisiae (strain ATCC 204508 / S288c) (Baker's yeast).